We begin with the raw amino-acid sequence, 343 residues long: NADH-quinone oxidoreductase subunit H (343 aa).

A run of 8 helical transmembrane segments spans residues 19–39 (VAWT…GVAY), 89–109 (ALFI…WAVI), 124–144 (LLYV…AGWA), 158–178 (AAQI…VLMA), 198–218 (WYLW…VAET), 257–277 (ILVA…PVAF), 279–299 (PDGI…FLWF), and 314–334 (LGWK…GGMM).

The protein belongs to the complex I subunit 1 family. In terms of assembly, NDH-1 is composed of 14 different subunits. Subunits NuoA, H, J, K, L, M, N constitute the membrane sector of the complex.

Its subcellular location is the cell inner membrane. The catalysed reaction is a quinone + NADH + 5 H(+)(in) = a quinol + NAD(+) + 4 H(+)(out). Its function is as follows. NDH-1 shuttles electrons from NADH, via FMN and iron-sulfur (Fe-S) centers, to quinones in the respiratory chain. The immediate electron acceptor for the enzyme in this species is believed to be ubiquinone. Couples the redox reaction to proton translocation (for every two electrons transferred, four hydrogen ions are translocated across the cytoplasmic membrane), and thus conserves the redox energy in a proton gradient. This subunit may bind ubiquinone. The chain is NADH-quinone oxidoreductase subunit H from Thiobacillus denitrificans (strain ATCC 25259 / T1).